A 370-amino-acid polypeptide reads, in one-letter code: Ig heavy chain C region (370 aa).

Ig-like domains follow at residues 40–134 (PTVI…RNIT), 145–237 (PAIK…DSIH), and 247–347 (PSVS…RTVN). 6 N-linked (GlcNAc...) asparagine glycosylation sites follow: Asn98, Asn132, Asn177, Asn343, Asn347, and Asn357.

This is Ig heavy chain C region from Heterodontus francisci (Horn shark).